Reading from the N-terminus, the 642-residue chain is Threonine--tRNA ligase (642 aa).

Residues M1–T61 enclose the TGS domain. The tract at residues D243–P534 is catalytic. Zn(2+)-binding residues include C334, H385, and H511.

It belongs to the class-II aminoacyl-tRNA synthetase family. Homodimer. Zn(2+) is required as a cofactor.

Its subcellular location is the cytoplasm. The catalysed reaction is tRNA(Thr) + L-threonine + ATP = L-threonyl-tRNA(Thr) + AMP + diphosphate + H(+). Functionally, catalyzes the attachment of threonine to tRNA(Thr) in a two-step reaction: L-threonine is first activated by ATP to form Thr-AMP and then transferred to the acceptor end of tRNA(Thr). Also edits incorrectly charged L-seryl-tRNA(Thr). The chain is Threonine--tRNA ligase from Salmonella dublin (strain CT_02021853).